A 1360-amino-acid polypeptide reads, in one-letter code: DNA-directed RNA polymerase subunit beta (1360 aa).

It belongs to the RNA polymerase beta chain family. In terms of assembly, the RNAP catalytic core consists of 2 alpha, 1 beta, 1 beta' and 1 omega subunit. When a sigma factor is associated with the core the holoenzyme is formed, which can initiate transcription.

The enzyme catalyses RNA(n) + a ribonucleoside 5'-triphosphate = RNA(n+1) + diphosphate. DNA-dependent RNA polymerase catalyzes the transcription of DNA into RNA using the four ribonucleoside triphosphates as substrates. This Ruthia magnifica subsp. Calyptogena magnifica protein is DNA-directed RNA polymerase subunit beta.